A 234-amino-acid chain; its full sequence is 2-C-methyl-D-erythritol 4-phosphate cytidylyltransferase (234 aa).

This sequence belongs to the IspD/TarI cytidylyltransferase family. IspD subfamily.

The enzyme catalyses 2-C-methyl-D-erythritol 4-phosphate + CTP + H(+) = 4-CDP-2-C-methyl-D-erythritol + diphosphate. It participates in isoprenoid biosynthesis; isopentenyl diphosphate biosynthesis via DXP pathway; isopentenyl diphosphate from 1-deoxy-D-xylulose 5-phosphate: step 2/6. Its function is as follows. Catalyzes the formation of 4-diphosphocytidyl-2-C-methyl-D-erythritol from CTP and 2-C-methyl-D-erythritol 4-phosphate (MEP). In Syntrophus aciditrophicus (strain SB), this protein is 2-C-methyl-D-erythritol 4-phosphate cytidylyltransferase.